The primary structure comprises 540 residues: Chaperonin GroEL 3 (540 aa).

ATP is bound by residues 30 to 33 (TLGP), Lys-51, 87 to 91 (DGTTT), Gly-415, 479 to 481 (NAA), and Asp-495.

It belongs to the chaperonin (HSP60) family. In terms of assembly, forms a cylinder of 14 subunits composed of two heptameric rings stacked back-to-back. Interacts with the co-chaperonin GroES.

Its subcellular location is the cytoplasm. It catalyses the reaction ATP + H2O + a folded polypeptide = ADP + phosphate + an unfolded polypeptide.. Functionally, together with its co-chaperonin GroES, plays an essential role in assisting protein folding. The GroEL-GroES system forms a nano-cage that allows encapsulation of the non-native substrate proteins and provides a physical environment optimized to promote and accelerate protein folding. This is Chaperonin GroEL 3 from Burkholderia ambifaria (strain ATCC BAA-244 / DSM 16087 / CCUG 44356 / LMG 19182 / AMMD) (Burkholderia cepacia (strain AMMD)).